The sequence spans 340 residues: Glutamyl-tRNA reductase (340 aa).

Substrate contacts are provided by residues 49-52, Ser108, 113-115, and Gln119; these read TCNR and ETE. Residue Cys50 is the Nucleophile of the active site. NADP(+) is bound at residue 188 to 193; sequence GAGEMS.

The protein belongs to the glutamyl-tRNA reductase family. Homodimer.

The catalysed reaction is (S)-4-amino-5-oxopentanoate + tRNA(Glu) + NADP(+) = L-glutamyl-tRNA(Glu) + NADPH + H(+). It functions in the pathway porphyrin-containing compound metabolism; protoporphyrin-IX biosynthesis; 5-aminolevulinate from L-glutamyl-tRNA(Glu): step 1/2. Functionally, catalyzes the NADPH-dependent reduction of glutamyl-tRNA(Glu) to glutamate 1-semialdehyde (GSA). The polypeptide is Glutamyl-tRNA reductase (Akkermansia muciniphila (strain ATCC BAA-835 / DSM 22959 / JCM 33894 / BCRC 81048 / CCUG 64013 / CIP 107961 / Muc)).